The following is a 96-amino-acid chain: Small ribosomal subunit protein bS6 (96 aa).

Belongs to the bacterial ribosomal protein bS6 family.

Functionally, binds together with bS18 to 16S ribosomal RNA. The chain is Small ribosomal subunit protein bS6 from Streptococcus suis (strain 98HAH33).